The chain runs to 404 residues: Rhomboid-related protein 3 (404 aa).

EF-hand domains are found at residues 34–69 (APED…HSSK) and 70–105 (LDPH…KRSN). The next 7 membrane-spanning stretches (helical) occupy residues 164-184 (WFMI…GVSL), 218-238 (IFMH…LLVG), 250-270 (IGLV…VADM), 274-294 (VVGS…NIVM), 303-325 (FKLL…AVWL), 338-358 (PSFV…VVVL), and 371-391 (WWIF…WNIF). The Nucleophile role is filled by serine 278. Residue histidine 343 is part of the active site.

Belongs to the peptidase S54 family.

The protein localises to the membrane. The enzyme catalyses Cleaves type-1 transmembrane domains using a catalytic dyad composed of serine and histidine that are contributed by different transmembrane domains.. May be involved in regulated intramembrane proteolysis and the subsequent release of functional polypeptides from their membrane anchors. The chain is Rhomboid-related protein 3 (RHBDL3) from Homo sapiens (Human).